We begin with the raw amino-acid sequence, 286 residues long: Expansin-B4 (286 aa).

A signal peptide spans 1–24 (MGSLSSLAAAAVFLSLLAVGHCAA). 2 N-linked (GlcNAc...) asparagine glycosylation sites follow: N28 and N44. One can recognise an Expansin-like EG45 domain in the interval 75–181 (GGACGFKHTN…TRVPCEFPGL (107 aa)). 3 disulfide bridges follow: C78–C106, C109–C176, and C114–C120. Residues 194-281 (VYFAVLVEYE…NWRPNTFYRS (88 aa)) enclose the Expansin-like CBD domain. The N-linked (GlcNAc...) asparagine glycan is linked to N257.

The protein belongs to the expansin family. Expansin B subfamily. As to expression, expressed in internodes.

Its subcellular location is the secreted. It is found in the cell wall. The protein resides in the membrane. Its function is as follows. May cause loosening and extension of plant cell walls by disrupting non-covalent bonding between cellulose microfibrils and matrix glucans. No enzymatic activity has been found. May be required for rapid internodal elongation in deepwater rice during submergence. In Oryza sativa subsp. japonica (Rice), this protein is Expansin-B4 (EXPB4).